A 331-amino-acid polypeptide reads, in one-letter code: DNA fragmentation factor subunit alpha (331 aa).

At Met1 the chain carries N-acetylmethionine. In terms of domain architecture, CIDE-N spans 17–96; that stretch reads TLKPCLLRRN…ALASNEKWAY (80 aa). Thr243 carries the phosphothreonine modification. Positions 305 to 331 are disordered; the sequence is SLRSISASKASPPGDLQNPKRARQDPT. Ser315 bears the Phosphoserine mark.

As to quaternary structure, heterodimer of DFFA and DFFB. Caspase-3 cleaves DFF45 at 2 sites to generate an active factor.

It localises to the cytoplasm. In terms of biological role, inhibitor of the caspase-activated DNase (DFF40). This is DNA fragmentation factor subunit alpha (DFFA) from Homo sapiens (Human).